The sequence spans 282 residues: MYFKRYLQLAKPGIIFGNLITLTGGFLLATHREIGFEYLPLFVYVMIGVALMIAAGCVFNNIYDQDIDSSMTRTQNRPLVTGDISVIQATIYGTILLILSCLVLYYLVNLLTLWIIIIGFIVYVGIYTVSKRLTIHATVLGGISGAIPPVAGYTAVVNILDYNALALFLILFFWQIPHSYAIAMLYIDDYKKVKLPMLPIVKGIAYTKKIMLFYLALFVVSCALPAVLGSADLFSFIVCMLVALFWMYKSIQSYRTDTDRVFAKTVFKFSIIVITAICLTMG.

Helical transmembrane passes span 9–29 (LAKP…FLLA), 39–59 (LPLF…GCVF), 79–99 (LVTG…LLIL), 102–122 (LVLY…GFIV), 139–159 (VLGG…VVNI), 165–185 (LALF…IAML), 210–230 (IMLF…VLGS), 231–251 (ADLF…YKSI), and 261–281 (VFAK…CLTM).

Belongs to the UbiA prenyltransferase family. Protoheme IX farnesyltransferase subfamily.

It localises to the cell inner membrane. The enzyme catalyses heme b + (2E,6E)-farnesyl diphosphate + H2O = Fe(II)-heme o + diphosphate. The protein operates within porphyrin-containing compound metabolism; heme O biosynthesis; heme O from protoheme: step 1/1. Converts heme B (protoheme IX) to heme O by substitution of the vinyl group on carbon 2 of heme B porphyrin ring with a hydroxyethyl farnesyl side group. In Francisella tularensis subsp. holarctica (strain LVS), this protein is Protoheme IX farnesyltransferase.